The primary structure comprises 430 residues: Enolase (430 aa).

Glutamine 164 provides a ligand contact to (2R)-2-phosphoglycerate. The Proton donor role is filled by glutamate 206. Mg(2+) contacts are provided by aspartate 243, glutamate 288, and aspartate 315. Residues lysine 340, arginine 369, serine 370, and lysine 391 each contribute to the (2R)-2-phosphoglycerate site. The active-site Proton acceptor is lysine 340.

This sequence belongs to the enolase family. Requires Mg(2+) as cofactor.

The protein resides in the cytoplasm. It is found in the secreted. The protein localises to the cell surface. It catalyses the reaction (2R)-2-phosphoglycerate = phosphoenolpyruvate + H2O. Its pathway is carbohydrate degradation; glycolysis; pyruvate from D-glyceraldehyde 3-phosphate: step 4/5. In terms of biological role, catalyzes the reversible conversion of 2-phosphoglycerate (2-PG) into phosphoenolpyruvate (PEP). It is essential for the degradation of carbohydrates via glycolysis. The chain is Enolase from Lysinibacillus sphaericus (strain C3-41).